A 104-amino-acid chain; its full sequence is SOSS complex subunit C (104 aa).

This sequence belongs to the SOSS-C family. As to quaternary structure, belongs to the multiprotein complex Integrator. Component of the SOSS complex, composed of SOSS-B (SOSS-B1/NABP2 or SOSS-B2/NABP1), SOSS-A/INTS3 and SOSS-C/INIP.

Its subcellular location is the nucleus. Its function is as follows. Component of the SOSS complex, a multiprotein complex that functions downstream of the MRN complex to promote DNA repair and G2/M checkpoint. The SOSS complex associates with single-stranded DNA at DNA lesions and influences diverse endpoints in the cellular DNA damage response including cell-cycle checkpoint activation, recombinational repair and maintenance of genomic stability. Required for efficient homologous recombination-dependent repair of double-strand breaks (DSBs). This chain is SOSS complex subunit C (INIP), found in Taeniopygia guttata (Zebra finch).